A 379-amino-acid polypeptide reads, in one-letter code: Very late expression factor 1 (379 aa).

The Tyr recombinase domain occupies 169 to 348 (VIDTILNFIN…YNIGLDETSS (180 aa)). Active-site residues include R210, K239, R303, and H326. Y335 (O-(3'-phospho-DNA)-tyrosine intermediate) is an active-site residue. The span at 346–358 (TSSEEENNNDDDD) shows a compositional bias: acidic residues. A disordered region spans residues 346–379 (TSSEEENNNDDDDAQHNRNSSGSSGESLLYYRNE). A compositionally biased stretch (low complexity) spans 362-379 (NRNSSGSSGESLLYYRNE).

The protein belongs to the 'phage' integrase family.

Its function is as follows. Plays a role in nucleocapsid assembly and serves an essential function during the final stages of the DNA packaging process. Participates in the processing of branched DNA molecules at the late stages of viral genome replication. This Lepidoptera (butterflies and moths) protein is Very late expression factor 1 (VLF-1).